A 369-amino-acid polypeptide reads, in one-letter code: Zeaxanthin 7,8(7',8')-cleavage dioxygenase, chromoplastic (369 aa).

4 residues coordinate Fe cation: H62, H112, H177, and H356.

This sequence belongs to the carotenoid oxygenase family. It depends on Fe(2+) as a cofactor. In the style branches.

Its subcellular location is the plastid. It localises to the chromoplast. The catalysed reaction is all-trans-zeaxanthin + 2 O2 = crocetin dialdehyde + 2 3beta-hydroxy-beta-cyclocitral. Functionally, cleaves zeaxanthin symmetrically at the 7-8 and 7'-8' double bonds to produce crocetin dialdehyde and hydroxy-beta-cyclocitral, two water-soluble precursors sequestred in vacuoles and involved in the synthesis of saffron pigment and aroma. This Crocus sativus (Saffron) protein is Zeaxanthin 7,8(7',8')-cleavage dioxygenase, chromoplastic (ZCD).